The chain runs to 231 residues: Orotidine 5'-phosphate decarboxylase (231 aa).

Substrate contacts are provided by residues D11, K33, 60–69, T117, R178, Q187, G207, and R208; that span reads DLKFHDIPNT. Catalysis depends on K62, which acts as the Proton donor.

Belongs to the OMP decarboxylase family. Type 1 subfamily. As to quaternary structure, homodimer.

The catalysed reaction is orotidine 5'-phosphate + H(+) = UMP + CO2. It functions in the pathway pyrimidine metabolism; UMP biosynthesis via de novo pathway; UMP from orotate: step 2/2. In terms of biological role, catalyzes the decarboxylation of orotidine 5'-monophosphate (OMP) to uridine 5'-monophosphate (UMP). The protein is Orotidine 5'-phosphate decarboxylase of Nitrosomonas eutropha (strain DSM 101675 / C91 / Nm57).